We begin with the raw amino-acid sequence, 874 residues long: DNA mismatch repair protein MutS (874 aa).

Basic and acidic residues predominate over residues 1-12; the sequence is MSNDRPLTHSEA. Residues 1 to 20 form a disordered region; sequence MSNDRPLTHSEAESSALRLG. An ATP-binding site is contributed by 661-668; the sequence is GPNASGKS. Positions 854-874 are disordered; it reads RKSSMGDPPTAPEINQGELPF.

The protein belongs to the DNA mismatch repair MutS family.

Functionally, this protein is involved in the repair of mismatches in DNA. It is possible that it carries out the mismatch recognition step. This protein has a weak ATPase activity. This is DNA mismatch repair protein MutS from Thermosynechococcus vestitus (strain NIES-2133 / IAM M-273 / BP-1).